The sequence spans 270 residues: Regulatory protein RecX (270 aa).

This sequence belongs to the RecX family.

It localises to the cytoplasm. In terms of biological role, modulates RecA activity. The chain is Regulatory protein RecX from Bacillus mycoides (strain KBAB4) (Bacillus weihenstephanensis).